A 166-amino-acid polypeptide reads, in one-letter code: Phosphopantetheine adenylyltransferase (166 aa).

S11 lines the substrate pocket. ATP-binding positions include 11–12 and H19; that span reads SF. Residues K43, V80, and R94 each contribute to the substrate site. ATP-binding positions include 95–97, E105, and 130–136; these read GLR and VRTVTAT.

Belongs to the bacterial CoaD family. In terms of assembly, homohexamer. Mg(2+) serves as cofactor.

Its subcellular location is the cytoplasm. It catalyses the reaction (R)-4'-phosphopantetheine + ATP + H(+) = 3'-dephospho-CoA + diphosphate. The protein operates within cofactor biosynthesis; coenzyme A biosynthesis; CoA from (R)-pantothenate: step 4/5. In terms of biological role, reversibly transfers an adenylyl group from ATP to 4'-phosphopantetheine, yielding dephospho-CoA (dPCoA) and pyrophosphate. The sequence is that of Phosphopantetheine adenylyltransferase from Chelativorans sp. (strain BNC1).